We begin with the raw amino-acid sequence, 873 residues long: Zinc fingers and homeoboxes protein 1 (873 aa).

The disordered stretch occupies residues 24–63 (LISDLDEGPPVLTPVENTRAESISSDEEVHESVDSDNQQN). Threonine 36 bears the Phosphothreonine mark. 3 positions are modified to phosphoserine: serine 45, serine 47, and serine 48. 2 consecutive C2H2-type zinc fingers follow at residues 70-93 (YECKYCTFQTPDLNMFTFHVDSEH) and 102-125 (YVCVECNFLTKRYDALSEHNLKYH). A Glycyl lysine isopeptide (Lys-Gly) (interchain with G-Cter in SUMO2) cross-link involves residue lysine 159. The segment at 198–236 (VHHNSVEDVPEEKENEIKPDREETVENPSSSASESNTST) is disordered. Serine 202 is modified (phosphoserine). Residues 212 to 221 (NEIKPDREET) show a composition bias toward basic and acidic residues. Over residues 223-236 (ENPSSSASESNTST) the composition is skewed to low complexity. The tract at residues 272-432 (NSNLIPKVLI…QNNVQKSQVP (161 aa)) is required for dimerization. The segment at 272 to 564 (NSNLIPKVLI…VQPKQSWNPF (293 aa)) is required for interaction with NFYA. Residues 284-346 (NSIPTYNAAL…LKHGVSWTPE (63 aa)) constitute a DNA-binding region (homeobox 1). The tract at residues 431-454 (VPAAQPTAETKPATAAVPTSQSVK) is disordered. Residues lysine 441, lysine 454, and lysine 485 each participate in a glycyl lysine isopeptide (Lys-Gly) (interchain with G-Cter in SUMO2) cross-link. Positions 464–526 (SFGIRAKKTK…YNQRNSKSNQ (63 aa)) form a DNA-binding region, homeobox 2. 3 disordered regions span residues 544–563 (DETTESPTVGTVQPKQSWNP), 626–668 (KEEK…CKKT), and 732–769 (SSMNGLSSLRKRGRGRPKGRGRGRPRGRPRGSKRINNW). Polar residues predominate over residues 550–562 (PTVGTVQPKQSWN). The segment at residues 569–630 (PQKFKEKTAE…KSKALKEEKM (62 aa)) is a DNA-binding region (homeobox 3). Lysine 629 is covalently cross-linked (Glycyl lysine isopeptide (Lys-Gly) (interchain with G-Cter in SUMO2)). A Phosphoserine modification is found at serine 648. Positions 660–722 (STGKICKKTP…YAWKNGNLKW (63 aa)) form a DNA-binding region, homeobox 4. The required for nuclear localization stretch occupies residues 734–768 (MNGLSSLRKRGRGRPKGRGRGRPRGRPRGSKRINN). The segment covering 740 to 764 (LRKRGRGRPKGRGRGRPRGRPRGSK) has biased composition (basic residues). At serine 774 the chain carries Phosphoserine. The segment at residues 777-832 (KFKTGTAILKDYYLKHKFLNEQDLDELVNKSHMGYEQVREWFAERQRRSELGIELF) is a DNA-binding region (homeobox 5). The segment at 829-873 (IELFEENEEEDEVIDDQEEDEEETDDSDTWEPPRHVKRKLSKSDD) is disordered. A compositionally biased stretch (acidic residues) spans 831-857 (LFEENEEEDEVIDDQEEDEEETDDSDT). Residues 831–873 (LFEENEEEDEVIDDQEEDEEETDDSDTWEPPRHVKRKLSKSDD) are required for repressor activity. A compositionally biased stretch (basic residues) spans 863–873 (HVKRKLSKSDD).

Belongs to the ZHX family. As to quaternary structure, forms homodimers. Heterodimer (via HD1 domain) with ZHX2 (via HD1 domain). Also forms a heterodimer with ZHX3 which is a prerequisite for repressor activity. Interacts with ATF7IP and NFYA. Interacts (via homeobox domains) with DNMT3B (via PWWP domain).

Its subcellular location is the nucleus. In terms of biological role, acts as a transcriptional repressor. Increases DNMT3B-mediated repressive transcriptional activity when DNMT3B is tethered to DNA. May link molecule between DNMT3B and other co-repressor proteins. This chain is Zinc fingers and homeoboxes protein 1 (ZHX1), found in Pongo pygmaeus (Bornean orangutan).